Reading from the N-terminus, the 311-residue chain is Lipoyl synthase (311 aa).

The [4Fe-4S] cluster site is built by cysteine 55, cysteine 60, cysteine 66, cysteine 81, cysteine 85, cysteine 88, and serine 292. The 215-residue stretch at 67–281 folds into the Radical SAM core domain; sequence WEDREATFLI…ARFAEGLGFA (215 aa).

This sequence belongs to the radical SAM superfamily. Lipoyl synthase family. The cofactor is [4Fe-4S] cluster.

The protein resides in the cytoplasm. It catalyses the reaction [[Fe-S] cluster scaffold protein carrying a second [4Fe-4S](2+) cluster] + N(6)-octanoyl-L-lysyl-[protein] + 2 oxidized [2Fe-2S]-[ferredoxin] + 2 S-adenosyl-L-methionine + 4 H(+) = [[Fe-S] cluster scaffold protein] + N(6)-[(R)-dihydrolipoyl]-L-lysyl-[protein] + 4 Fe(3+) + 2 hydrogen sulfide + 2 5'-deoxyadenosine + 2 L-methionine + 2 reduced [2Fe-2S]-[ferredoxin]. It functions in the pathway protein modification; protein lipoylation via endogenous pathway; protein N(6)-(lipoyl)lysine from octanoyl-[acyl-carrier-protein]: step 2/2. Catalyzes the radical-mediated insertion of two sulfur atoms into the C-6 and C-8 positions of the octanoyl moiety bound to the lipoyl domains of lipoate-dependent enzymes, thereby converting the octanoylated domains into lipoylated derivatives. This Mycobacterium bovis (strain ATCC BAA-935 / AF2122/97) protein is Lipoyl synthase.